The primary structure comprises 185 residues: Elongation factor P (185 aa).

This sequence belongs to the elongation factor P family.

Its subcellular location is the cytoplasm. Its pathway is protein biosynthesis; polypeptide chain elongation. Involved in peptide bond synthesis. Stimulates efficient translation and peptide-bond synthesis on native or reconstituted 70S ribosomes in vitro. Probably functions indirectly by altering the affinity of the ribosome for aminoacyl-tRNA, thus increasing their reactivity as acceptors for peptidyl transferase. In Desulfitobacterium hafniense (strain Y51), this protein is Elongation factor P.